Consider the following 259-residue polypeptide: Secretion system apparatus protein SsaT (259 aa).

6 helical membrane passes run 9 to 29 (LIALAVAFIRPLSLSLLLPLL), 35 to 55 (GAALLRNGVLMSLTFPILPII), 78 to 98 (VIIGFSIGFCAAVPFWAVDMA), 127 to 147 (LLFSQFLCVIFFISGGMEFIL), 185 to 205 (ISFSLPAIICMVLADLALGLL), and 214 to 234 (VFFFSMPLKSILVLLTLLISF).

This sequence belongs to the FliR/MopE/SpaR family.

The protein localises to the cell membrane. Part of a type III secretion system. The polypeptide is Secretion system apparatus protein SsaT (ssaT) (Salmonella typhimurium (strain LT2 / SGSC1412 / ATCC 700720)).